We begin with the raw amino-acid sequence, 502 residues long: Probable cytosol aminopeptidase (502 aa).

Residues lysine 269 and aspartate 274 each coordinate Mn(2+). Lysine 281 is an active-site residue. Residues aspartate 292, aspartate 351, and glutamate 353 each contribute to the Mn(2+) site. The active site involves arginine 355.

This sequence belongs to the peptidase M17 family. Mn(2+) serves as cofactor.

Its subcellular location is the cytoplasm. The enzyme catalyses Release of an N-terminal amino acid, Xaa-|-Yaa-, in which Xaa is preferably Leu, but may be other amino acids including Pro although not Arg or Lys, and Yaa may be Pro. Amino acid amides and methyl esters are also readily hydrolyzed, but rates on arylamides are exceedingly low.. It catalyses the reaction Release of an N-terminal amino acid, preferentially leucine, but not glutamic or aspartic acids.. Its function is as follows. Presumably involved in the processing and regular turnover of intracellular proteins. Catalyzes the removal of unsubstituted N-terminal amino acids from various peptides. The protein is Probable cytosol aminopeptidase of Aliivibrio fischeri (strain MJ11) (Vibrio fischeri).